We begin with the raw amino-acid sequence, 365 residues long: Holliday junction branch migration complex subunit RuvB (365 aa).

The large ATPase domain (RuvB-L) stretch occupies residues 1 to 191 (MSPELGGGYD…FGFTAHMDFY (191 aa)). ATP-binding positions include L30, R31, G72, K75, T76, S77, 138–140 (EDF), R181, Y191, and R228. T76 contacts Mg(2+). The interval 192–262 (EPAELKQILM…IAHAALAVYD (71 aa)) is small ATPAse domain (RuvB-S). The segment at 265 to 365 (QLGLDRLDRS…QASLFDPEDP (101 aa)) is head domain (RuvB-H). The DNA site is built by R320 and R325.

It belongs to the RuvB family. In terms of assembly, homohexamer. Forms an RuvA(8)-RuvB(12)-Holliday junction (HJ) complex. HJ DNA is sandwiched between 2 RuvA tetramers; dsDNA enters through RuvA and exits via RuvB. An RuvB hexamer assembles on each DNA strand where it exits the tetramer. Each RuvB hexamer is contacted by two RuvA subunits (via domain III) on 2 adjacent RuvB subunits; this complex drives branch migration. In the full resolvosome a probable DNA-RuvA(4)-RuvB(12)-RuvC(2) complex forms which resolves the HJ.

It localises to the cytoplasm. The enzyme catalyses ATP + H2O = ADP + phosphate + H(+). In terms of biological role, the RuvA-RuvB-RuvC complex processes Holliday junction (HJ) DNA during genetic recombination and DNA repair, while the RuvA-RuvB complex plays an important role in the rescue of blocked DNA replication forks via replication fork reversal (RFR). RuvA specifically binds to HJ cruciform DNA, conferring on it an open structure. The RuvB hexamer acts as an ATP-dependent pump, pulling dsDNA into and through the RuvAB complex. RuvB forms 2 homohexamers on either side of HJ DNA bound by 1 or 2 RuvA tetramers; 4 subunits per hexamer contact DNA at a time. Coordinated motions by a converter formed by DNA-disengaged RuvB subunits stimulates ATP hydrolysis and nucleotide exchange. Immobilization of the converter enables RuvB to convert the ATP-contained energy into a lever motion, pulling 2 nucleotides of DNA out of the RuvA tetramer per ATP hydrolyzed, thus driving DNA branch migration. The RuvB motors rotate together with the DNA substrate, which together with the progressing nucleotide cycle form the mechanistic basis for DNA recombination by continuous HJ branch migration. Branch migration allows RuvC to scan DNA until it finds its consensus sequence, where it cleaves and resolves cruciform DNA. This Rhodococcus opacus (strain B4) protein is Holliday junction branch migration complex subunit RuvB.